Reading from the N-terminus, the 222-residue chain is Eukaryotic translation initiation factor 3 subunit K (222 aa).

A PCI domain is found at 46 to 208; that stretch reads YDLEANLAVL…KIKTKNITEK (163 aa).

Belongs to the eIF-3 subunit K family. As to quaternary structure, component of the eukaryotic translation initiation factor 3 (eIF-3) complex. The eIF-3 complex interacts with pix.

The protein localises to the cytoplasm. Component of the eukaryotic translation initiation factor 3 (eIF-3) complex, which is involved in protein synthesis of a specialized repertoire of mRNAs and, together with other initiation factors, stimulates binding of mRNA and methionyl-tRNAi to the 40S ribosome. The eIF-3 complex specifically targets and initiates translation of a subset of mRNAs involved in cell proliferation. This is Eukaryotic translation initiation factor 3 subunit K from Drosophila grimshawi (Hawaiian fruit fly).